Here is a 393-residue protein sequence, read N- to C-terminus: Protein phosphatase 2C homolog 4 (393 aa).

A PPM-type phosphatase domain is found at Tyr33–Leu368. Mn(2+)-binding residues include Asp83, Gly84, Asp310, and Asp359.

This sequence belongs to the PP2C family. Requires Mg(2+) as cofactor. Mn(2+) serves as cofactor.

It carries out the reaction O-phospho-L-seryl-[protein] + H2O = L-seryl-[protein] + phosphate. It catalyses the reaction O-phospho-L-threonyl-[protein] + H2O = L-threonyl-[protein] + phosphate. This Saccharomyces cerevisiae (strain ATCC 204508 / S288c) (Baker's yeast) protein is Protein phosphatase 2C homolog 4 (PTC4).